The primary structure comprises 447 residues: Putative branched-chain amino acid carrier protein SH1502 (447 aa).

13 consecutive transmembrane segments (helical) span residues 6–26, 40–60, 74–94, 116–136, 143–163, 193–213, 229–249, 270–287, 290–310, 328–348, 350–370, 382–402, and 417–437; these read WIVG…IFPP, VIAF…VGAL, PKFS…LFAI, LVLF…CINP, IGSL…IKGF, GYLT…VNAI, VMSG…LGFI, VGAY…GVFG, LLGI…IVSV, IFFT…VISM, VPVL…ILLA, IPIA…NGWV, and LEWF…AKFV.

It belongs to the branched chain amino acid transporter family.

The protein localises to the cell membrane. Functionally, component of the transport system for branched-chain amino acids (leucine, isoleucine and valine), which is coupled to a proton motive force. This Staphylococcus haemolyticus (strain JCSC1435) protein is Putative branched-chain amino acid carrier protein SH1502.